Here is a 1079-residue protein sequence, read N- to C-terminus: DNA ligase 4 (1079 aa).

The interval Met-1–Gln-20 is disordered. Residues Glu-295, Lys-297, Leu-298, Arg-302, Glu-357, Phe-395, Glu-460, Lys-465, Lys-482, and Lys-484 each coordinate ATP. The N6-AMP-lysine intermediate role is filled by Lys-297. Glu-357 is a binding site for Mg(2+). Residue Glu-460 participates in Mg(2+) binding. In terms of domain architecture, BRCT 1 spans Val-699–Leu-789. Residues Asp-838–Val-847 show a composition bias toward acidic residues. A disordered region spans residues Asp-838 to Tyr-942. 2 stretches are compositionally biased toward basic and acidic residues: residues Glu-848–Gln-878 and Met-900–Arg-914. A BRCT 2 domain is found at Asp-968–Pro-1078.

The protein belongs to the ATP-dependent DNA ligase family. The cofactor is Mg(2+).

It localises to the nucleus. It catalyses the reaction ATP + (deoxyribonucleotide)n-3'-hydroxyl + 5'-phospho-(deoxyribonucleotide)m = (deoxyribonucleotide)n+m + AMP + diphosphate.. DNA ligase involved in DNA non-homologous end joining (NHEJ); required for double-strand break (DSB) repair. This chain is DNA ligase 4 (LIG4), found in Cryptococcus neoformans var. neoformans serotype D (strain JEC21 / ATCC MYA-565) (Filobasidiella neoformans).